The primary structure comprises 292 residues: Ribosomal RNA small subunit methyltransferase H (292 aa).

Residues 32–34 (GGH), Asp-51, Leu-87, Asp-101, and Gln-108 contribute to the S-adenosyl-L-methionine site.

It belongs to the methyltransferase superfamily. RsmH family.

It localises to the cytoplasm. It carries out the reaction cytidine(1402) in 16S rRNA + S-adenosyl-L-methionine = N(4)-methylcytidine(1402) in 16S rRNA + S-adenosyl-L-homocysteine + H(+). In terms of biological role, specifically methylates the N4 position of cytidine in position 1402 (C1402) of 16S rRNA. In Pseudothermotoga lettingae (strain ATCC BAA-301 / DSM 14385 / NBRC 107922 / TMO) (Thermotoga lettingae), this protein is Ribosomal RNA small subunit methyltransferase H.